The chain runs to 92 residues: Small ribosomal subunit protein uS19c (92 aa).

This sequence belongs to the universal ribosomal protein uS19 family.

It is found in the plastid. The protein localises to the chloroplast. Functionally, protein S19 forms a complex with S13 that binds strongly to the 16S ribosomal RNA. In Nandina domestica (Heavenly bamboo), this protein is Small ribosomal subunit protein uS19c.